The chain runs to 116 residues: Ig heavy chain V region 441 (116 aa).

An N-terminal signal peptide occupies residues 1–18 (MDFGLIFFIVALLKGVQC). Residues 19 to 116 (EVKLLESGGG…EDTALYYCAR (98 aa)) form the Ig-like domain.

In Mus musculus (Mouse), this protein is Ig heavy chain V region 441.